The following is a 616-amino-acid chain: Chaperone protein HscA (616 aa).

The protein belongs to the heat shock protein 70 family.

Its function is as follows. Chaperone involved in the maturation of iron-sulfur cluster-containing proteins. Has a low intrinsic ATPase activity which is markedly stimulated by HscB. Involved in the maturation of IscU. In Salmonella paratyphi C (strain RKS4594), this protein is Chaperone protein HscA.